The primary structure comprises 122 residues: Large ribosomal subunit protein uL14c (122 aa).

It belongs to the universal ribosomal protein uL14 family. As to quaternary structure, part of the 50S ribosomal subunit.

Its subcellular location is the plastid. It is found in the chloroplast. Its function is as follows. Binds to 23S rRNA. This Cycas taitungensis (Prince sago) protein is Large ribosomal subunit protein uL14c.